The following is a 401-amino-acid chain: Deubiquitinase and deneddylase Dub1 (401 aa).

Positions 1-11 are enriched in polar residues; it reads MLSPTNSTSKT. The disordered stretch occupies residues 1-24; it reads MLSPTNSTSKTAPVPPRDSSKPVL. Residues 40–60 form a helical membrane-spanning segment; sequence TALAVLLVVVTLGLILLFYSF. Residues 77-130 are disordered; that stretch reads KEQPTISIPVPLPSPPLAVPRPSTPPPPVISRPSTPSAPKPSTPPPLLPKAPKP. Pro residues predominate over residues 86–128; that stretch reads VPLPSPPLAVPRPSTPPPPVISRPSTPSAPKPSTPPPLLPKAP. Catalysis depends on residues H275, D292, and C345.

Belongs to the peptidase C48 family. Binds to host NFKBIA.

It localises to the secreted. The protein localises to the host cell. Its subcellular location is the membrane. In terms of biological role, effector proteins function to alter host cell physiology and promote bacterial survival in host tissues. This protease possesses deubiquitinating and deneddylating activities. Impairs ubiquitination and degradation of NF-kappa-B inhibitor alpha (NFKBIA), thereby preventing NF-kappa-B activation. The sequence is that of Deubiquitinase and deneddylase Dub1 (cdu1) from Chlamydia trachomatis serovar L2 (strain ATCC VR-902B / DSM 19102 / 434/Bu).